An 82-amino-acid chain; its full sequence is UPF0291 protein PEPE_0871 (82 aa).

Belongs to the UPF0291 family.

It is found in the cytoplasm. The chain is UPF0291 protein PEPE_0871 from Pediococcus pentosaceus (strain ATCC 25745 / CCUG 21536 / LMG 10740 / 183-1w).